The chain runs to 167 residues: Ribosome maturation factor RimM (167 aa).

Positions 94 to 167 (EENEYFIKDL…VMVVHLLEGL (74 aa)) constitute a PRC barrel domain.

This sequence belongs to the RimM family. As to quaternary structure, binds ribosomal protein uS19.

It is found in the cytoplasm. In terms of biological role, an accessory protein needed during the final step in the assembly of 30S ribosomal subunit, possibly for assembly of the head region. Essential for efficient processing of 16S rRNA. May be needed both before and after RbfA during the maturation of 16S rRNA. It has affinity for free ribosomal 30S subunits but not for 70S ribosomes. The polypeptide is Ribosome maturation factor RimM (Thermoanaerobacter pseudethanolicus (strain ATCC 33223 / 39E) (Clostridium thermohydrosulfuricum)).